A 103-amino-acid polypeptide reads, in one-letter code: MYAVIETGGKQYKVQEGDVLFIEKLANEEGSTVTFDKVVAVSKDDKVSFGTPFVSNASVTAKVLCHGKGKKIIVFKYKPKKGYRRKQGHRQPYTKIQIEKINA.

The protein belongs to the bacterial ribosomal protein bL21 family. Part of the 50S ribosomal subunit. Contacts protein L20.

In terms of biological role, this protein binds to 23S rRNA in the presence of protein L20. This Acetivibrio thermocellus (strain ATCC 27405 / DSM 1237 / JCM 9322 / NBRC 103400 / NCIMB 10682 / NRRL B-4536 / VPI 7372) (Clostridium thermocellum) protein is Large ribosomal subunit protein bL21.